A 219-amino-acid chain; its full sequence is Protein-L-isoaspartate O-methyltransferase (219 aa).

Ser65 is an active-site residue.

Belongs to the methyltransferase superfamily. L-isoaspartyl/D-aspartyl protein methyltransferase family. As to quaternary structure, monomer.

The protein localises to the cytoplasm. It carries out the reaction [protein]-L-isoaspartate + S-adenosyl-L-methionine = [protein]-L-isoaspartate alpha-methyl ester + S-adenosyl-L-homocysteine. In terms of biological role, catalyzes the methyl esterification of L-isoaspartyl residues in peptides and proteins that result from spontaneous decomposition of normal L-aspartyl and L-asparaginyl residues. It plays a role in the repair and/or degradation of damaged proteins. The sequence is that of Protein-L-isoaspartate O-methyltransferase (pcm) from Pyrococcus furiosus (strain ATCC 43587 / DSM 3638 / JCM 8422 / Vc1).